Consider the following 296-residue polypeptide: NAD kinase (296 aa).

The Proton acceptor role is filled by aspartate 72. NAD(+)-binding positions include 72-73 (DG), 146-147 (ND), arginine 157, lysine 174, aspartate 176, 187-192 (TAYALS), and glutamine 247.

This sequence belongs to the NAD kinase family. It depends on a divalent metal cation as a cofactor.

It is found in the cytoplasm. It carries out the reaction NAD(+) + ATP = ADP + NADP(+) + H(+). Involved in the regulation of the intracellular balance of NAD and NADP, and is a key enzyme in the biosynthesis of NADP. Catalyzes specifically the phosphorylation on 2'-hydroxyl of the adenosine moiety of NAD to yield NADP. The sequence is that of NAD kinase from Pseudomonas putida (strain ATCC 700007 / DSM 6899 / JCM 31910 / BCRC 17059 / LMG 24140 / F1).